The chain runs to 537 residues: uncharacterized protein (537 aa).

The signal sequence occupies residues methionine 1–glycine 15. The next 2 membrane-spanning stretches (helical) occupy residues valine 459–phenylalanine 479 and valine 490–threonine 510.

It localises to the host membrane. This is an uncharacterized protein from Citrus sinensis (Sweet orange).